The primary structure comprises 391 residues: MDCIECRGRMLCSRKVCPLMPSLRPQVSVERDILGSSPPSVFVGRYGYPKVRICPAVPPFTGDTKIYDTPEMWREVPVERVLEFRYSMILGQFRADVRRSKEVEVVQEMSLYDKPIDVEVSFAKPPSVRAFFDDVLPPFGASAPAKEVIIHSAPRPPKAVEKVYYDTDLRAVEAMSYLYERGVAVSHIQKLLSAGTLGVKRKLVPTRWAITAVDDTLSKQIIEEIKQYETIDRYRVFVLKESKNLFVAILCPSPWSYEWGEAWYPDTTWNRTRKVGVLTDSEGFFGRTTYARLGGCYYSSRLATAEYLRRIRRQATAIVWREIYPGFNVPIGVWFVREMLRKMYAGKYCEFDTLEDALRFVDKHSNLDVGRWIEKSTLVKRGRQRTLWEFM.

A C4-type zinc finger spans residues 3–17 (CIECRGRMLCSRKVC). Positions 384–391 (QRTLWEFM) match the PIP motif motif.

Belongs to the Nre family. Interacts with the DNA polymerase sliding clamp (PCNA) via the PIP (PCNA-interacting peptide) motif.

Its function is as follows. Involved in DNA damage repair. This chain is DNA repair protein NreB, found in Archaeoglobus fulgidus (strain ATCC 49558 / DSM 4304 / JCM 9628 / NBRC 100126 / VC-16).